Consider the following 177-residue polypeptide: NAD(P)H-quinone oxidoreductase subunit 6, chloroplastic (177 aa).

Helical transmembrane passes span 10–30, 32–52, 61–81, 92–112, and 152–172; these read FLLV…VLLT, PIFS…FYTP, AQLL…VMFM, LWTV…VSLI, and FFLP…GAIS.

The protein belongs to the complex I subunit 6 family. In terms of assembly, NDH is composed of at least 16 different subunits, 5 of which are encoded in the nucleus.

It localises to the plastid. It is found in the chloroplast thylakoid membrane. It carries out the reaction a plastoquinone + NADH + (n+1) H(+)(in) = a plastoquinol + NAD(+) + n H(+)(out). The catalysed reaction is a plastoquinone + NADPH + (n+1) H(+)(in) = a plastoquinol + NADP(+) + n H(+)(out). NDH shuttles electrons from NAD(P)H:plastoquinone, via FMN and iron-sulfur (Fe-S) centers, to quinones in the photosynthetic chain and possibly in a chloroplast respiratory chain. The immediate electron acceptor for the enzyme in this species is believed to be plastoquinone. Couples the redox reaction to proton translocation, and thus conserves the redox energy in a proton gradient. This Ranunculus macranthus (Large buttercup) protein is NAD(P)H-quinone oxidoreductase subunit 6, chloroplastic (ndhG).